An 862-amino-acid polypeptide reads, in one-letter code: Valine--tRNA ligase (862 aa).

The 'HIGH' region signature appears at 44–53 (NVTGSLHMGH). Cysteine 176, cysteine 179, cysteine 344, cysteine 347, cysteine 417, cysteine 420, cysteine 438, and cysteine 441 together coordinate Zn(2+). The 'KMSKS' region motif lies at 528-532 (KMSKS). Lysine 531 is a binding site for ATP. Positions 802–862 (RRRQEKRLKE…RIREALSQIG (61 aa)) form a coiled coil.

The protein belongs to the class-I aminoacyl-tRNA synthetase family. ValS type 1 subfamily. As to quaternary structure, monomer. It depends on Zn(2+) as a cofactor.

The protein resides in the cytoplasm. It catalyses the reaction tRNA(Val) + L-valine + ATP = L-valyl-tRNA(Val) + AMP + diphosphate. Functionally, catalyzes the attachment of valine to tRNA(Val). As ValRS can inadvertently accommodate and process structurally similar amino acids such as threonine, to avoid such errors, it has a 'posttransfer' editing activity that hydrolyzes mischarged Thr-tRNA(Val) in a tRNA-dependent manner. In Thermus thermophilus (strain ATCC 27634 / DSM 579 / HB8), this protein is Valine--tRNA ligase.